A 149-amino-acid chain; its full sequence is UPF0178 protein SERP0336 (149 aa).

The protein belongs to the UPF0178 family.

The protein is UPF0178 protein SERP0336 of Staphylococcus epidermidis (strain ATCC 35984 / DSM 28319 / BCRC 17069 / CCUG 31568 / BM 3577 / RP62A).